The following is a 483-amino-acid chain: Regulatory protein ViaA (483 aa).

Belongs to the ViaA family. In terms of assembly, homodimer. Interacts with RavA.

It is found in the cytoplasm. Component of the RavA-ViaA chaperone complex, which may act on the membrane to optimize the function of some of the respiratory chains. ViaA stimulates the ATPase activity of RavA. This chain is Regulatory protein ViaA, found in Escherichia coli O7:K1 (strain IAI39 / ExPEC).